The following is a 128-amino-acid chain: Holo-[acyl-carrier-protein] synthase (128 aa).

Residues D7 and E55 each coordinate Mg(2+).

It belongs to the P-Pant transferase superfamily. AcpS family. Mg(2+) is required as a cofactor.

It localises to the cytoplasm. It carries out the reaction apo-[ACP] + CoA = holo-[ACP] + adenosine 3',5'-bisphosphate + H(+). Functionally, transfers the 4'-phosphopantetheine moiety from coenzyme A to a Ser of acyl-carrier-protein. This chain is Holo-[acyl-carrier-protein] synthase, found in Moorella thermoacetica (strain ATCC 39073 / JCM 9320).